A 242-amino-acid chain; its full sequence is Transcription factor Spi-C (242 aa).

A DNA-binding region (ETS) is located at residues 112 to 195 (LRLFEYLFES…IRRKLTYQFS (84 aa)).

Belongs to the ETS family. In terms of assembly, binds DNA as a monomer. As to expression, expressed in lymphoid tissues, including spleen, bone marrow and thymus. According to PubMed:19037245, highly expressed in red pulp macrophages and, at lower, levels in B-cells, but not in other cells, including, monocytes, dendritic cells and other tissue macrophages. According to PubMed:10464163 expressed in pre- and mature B-cells but not in immature B-cells; according to PubMed:10187812 not expressed in pre- but predominantly in mature B-cells and at lower levels in macrophages.

The protein localises to the nucleus. Controls the development of red pulp macrophages required for red blood cells recycling and iron homeostasis. Transcription factor that binds to the PU-box, a purine-rich DNA sequence (5'-GAGGA[AT]-3') that can act as a lymphoid-specific enhancer. Regulates VCAM1 gene expression. The chain is Transcription factor Spi-C (Spic) from Mus musculus (Mouse).